The chain runs to 282 residues: Armadillo repeat-containing protein 1 (282 aa).

Position 1 is an N-acetylmethionine (Met-1). One copy of the ARM repeat lies at 39–81 (GCLPGLILSMDHPNPPVVHSALLALRYLAECRANREKMKGELG). Thr-137 bears the Phosphothreonine mark. Ser-189, Ser-246, Ser-260, and Ser-267 each carry phosphoserine. Residues 239–261 (DYLPEDESPTKEQDKAVSRVGSH) form a disordered region. Over residues 246–255 (SPTKEQDKAV) the composition is skewed to basic and acidic residues.

Interacts with mitochondrial contact site and cristae organizing system (MICOS) complex components IMMT/MIC60 and MICOS10/MIC10. Interacts with mitochondrial outer membrane sorting assembly machinery (SAM) complex components SAMM50 and MTX1.

The protein localises to the cytoplasm. It is found in the mitochondrion. It localises to the mitochondrion outer membrane. In terms of biological role, in association with mitochondrial contact site and cristae organizing system (MICOS) complex components and mitochondrial outer membrane sorting assembly machinery (SAM) complex components may regulate mitochondrial dynamics playing a role in determining mitochondrial length, distribution and motility. This chain is Armadillo repeat-containing protein 1 (ARMC1), found in Pongo abelii (Sumatran orangutan).